Here is a 475-residue protein sequence, read N- to C-terminus: Amino acid permease 8 (475 aa).

The tract at residues 1 to 22 (MDAYNNPSAVESGDAAVKSVDD) is disordered. At 1 to 31 (MDAYNNPSAVESGDAAVKSVDDDGREKRTGT) the chain is on the cytoplasmic side. Transmembrane regions (helical) follow at residues 32–52 (FWTASAHIITAVIGSGVLSLA) and 53–73 (WAIAQLGWVAGTTVLVAFAII). Topologically, residues 74–120 (TYYTSTLLADCYRSPDSITGTRNYNYMGVVRSYLGGKKVQLCGVAQY) are cytoplasmic. A helical transmembrane segment spans residues 121 to 141 (VNLVGVTIGYTITASISLVAI). Topologically, residues 142–157 (GKSNCYHDKGHKAKCS) are extracellular. A helical transmembrane segment spans residues 158–178 (VSNYPYMAAFGIVQIILSQLP). At 179 to 185 (NFHKLSF) the chain is on the cytoplasmic side. The chain crosses the membrane as a helical span at residues 186 to 206 (LSIIAAVMSFSYASIGIGLAI). Residues 207 to 236 (ATVASGKIGKTELTGTVIGVDVTASEKVWK) are Extracellular-facing. Residues 237 to 257 (LFQAIGDIAFSYAFTTILIEI) traverse the membrane as a helical segment. Topologically, residues 258 to 276 (QDTLRSSPPENKVMKRASL) are cytoplasmic. The chain crosses the membrane as a helical span at residues 277 to 297 (VGVSTTTVFYILCGCIGYAAF). At 298 to 314 (GNQAPGDFLTDFGFYEP) the chain is on the extracellular side. The chain crosses the membrane as a helical span at residues 315–335 (YWLIDFANACIALHLIGAYQV). The Cytoplasmic segment spans residues 336-378 (YAQPFFQFVEENCNKKWPQSNFINKEYSSKVPLLGKCRVNLFR). Residues 379–398 (LVWRTCYVVLTTFVAMIFPF) form a helical membrane-spanning segment. Over 399-401 (FNA) the chain is Extracellular. A helical transmembrane segment spans residues 402–424 (ILGLLGAFAFWPLTVYFPVAMHI). Over 425–441 (AQAKVKKYSRRWLALNL) the chain is Cytoplasmic. The helical transmembrane segment at 442-462 (LVLVCLIVSALAAVGSIIGLI) threads the bilayer. Residues 463–475 (NSVKSYKPFKNLD) are Extracellular-facing.

The protein belongs to the amino acid/polyamine transporter 2 family. Amino acid/auxin permease (AAAP) (TC 2.A.18.2) subfamily. Expressed in flower buds, siliques, developing seeds and funiculi.

The protein resides in the cell membrane. Functionally, amino acid-proton symporter. Stereospecific transporter with a broad specificity for glutamate, aspartate and neutral and acidic amino acids. This chain is Amino acid permease 8 (AAP8), found in Arabidopsis thaliana (Mouse-ear cress).